The chain runs to 557 residues: Urocanate hydratase (557 aa).

NAD(+) contacts are provided by residues 52 to 53, glutamine 130, 176 to 178, glutamate 196, arginine 201, 242 to 243, 263 to 267, 273 to 274, and tyrosine 322; these read GG, GMG, NA, QTSAH, and YL. The active site involves cysteine 410. Glycine 492 lines the NAD(+) pocket.

The protein belongs to the urocanase family. NAD(+) serves as cofactor.

It is found in the cytoplasm. The enzyme catalyses 4-imidazolone-5-propanoate = trans-urocanate + H2O. It participates in amino-acid degradation; L-histidine degradation into L-glutamate; N-formimidoyl-L-glutamate from L-histidine: step 2/3. Catalyzes the conversion of urocanate to 4-imidazolone-5-propionate. This chain is Urocanate hydratase, found in Allorhizobium ampelinum (strain ATCC BAA-846 / DSM 112012 / S4) (Agrobacterium vitis (strain S4)).